The chain runs to 534 residues: CD276 antigen (534 aa).

An N-terminal signal peptide occupies residues 1–28 (MLRRRGSPGMGVHVGAALGALWFCLTGA). The region spanning 29 to 139 (LEVQVPEDPV…GSAAVSLQVA (111 aa)) is the Ig-like V-type 1 domain. Over 29 to 466 (LEVQVPEDPV…GQPMTFPPEA (438 aa)) the chain is Extracellular. 4 disulfides stabilise this stretch: Cys-50-Cys-122, Cys-165-Cys-220, Cys-268-Cys-340, and Cys-383-Cys-438. Asn-104, Asn-189, Asn-215, Asn-322, Asn-407, and Asn-433 each carry an N-linked (GlcNAc...) asparagine glycan. Positions 145-238 (PSMTLEPNKD…QDAHSSVTIT (94 aa)) constitute an Ig-like C2-type 1 domain. Residues 243–357 (PTGAVEVQVP…GSAAVSLQVA (115 aa)) form the Ig-like V-type 2 domain. An Ig-like C2-type 2 domain is found at 363 to 456 (PSMTLEPNKD…QDAHGSVTIT (94 aa)). The chain crosses the membrane as a helical span at residues 467-487 (LWVTVGLSVCLIALLVALAFV). At 488 to 534 (CWRKIKQSCEEENAGAEDQDGEGEGSKTALQPLKHSDSKEDDGQEIA) the chain is on the cytoplasmic side. The segment covering 498-510 (EENAGAEDQDGEG) has biased composition (acidic residues). Positions 498 to 534 (EENAGAEDQDGEGEGSKTALQPLKHSDSKEDDGQEIA) are disordered. The residue at position 525 (Ser-525) is a Phosphoserine.

Belongs to the immunoglobulin superfamily. BTN/MOG family. As to quaternary structure, interacts with TREML2 and this interaction enhances T-cell activation. As to expression, ubiquitous but not detectable in peripheral blood lymphocytes or granulocytes. Weakly expressed in resting monocytes. Expressed in dendritic cells derived from monocytes. Expressed in epithelial cells of sinonasal tissue. Expressed in extravillous trophoblast cells and Hofbauer cells of the first trimester placenta and term placenta.

It localises to the membrane. May participate in the regulation of T-cell-mediated immune response. May play a protective role in tumor cells by inhibiting natural-killer mediated cell lysis as well as a role of marker for detection of neuroblastoma cells. May be involved in the development of acute and chronic transplant rejection and in the regulation of lymphocytic activity at mucosal surfaces. Could also play a key role in providing the placenta and fetus with a suitable immunological environment throughout pregnancy. Both isoform 1 and isoform 2 appear to be redundant in their ability to modulate CD4 T-cell responses. Isoform 2 is shown to enhance the induction of cytotoxic T-cells and selectively stimulates interferon gamma production in the presence of T-cell receptor signaling. The polypeptide is CD276 antigen (CD276) (Homo sapiens (Human)).